A 592-amino-acid chain; its full sequence is Membrane protein insertase YidC (592 aa).

A helical membrane pass occupies residues 7-27 (NYFVAIALSVLILVAWQYFYV). Positions 38–74 (AEKAQQTQQVQPQQGGQQPAPGQALPGGAVPGESRDQ) are disordered. Residues 41–69 (AQQTQQVQPQQGGQQPAPGQALPGGAVPG) are compositionally biased toward low complexity. Transmembrane regions (helical) follow at residues 367-387 (LFGN…LIFF), 441-461 (WPIL…YITI), 486-506 (LFGL…WPII), and 530-550 (FTWM…GLVI).

It belongs to the OXA1/ALB3/YidC family. Type 1 subfamily. As to quaternary structure, interacts with the Sec translocase complex via SecD. Specifically interacts with transmembrane segments of nascent integral membrane proteins during membrane integration.

The protein resides in the cell inner membrane. Functionally, required for the insertion and/or proper folding and/or complex formation of integral membrane proteins into the membrane. Involved in integration of membrane proteins that insert both dependently and independently of the Sec translocase complex, as well as at least some lipoproteins. Aids folding of multispanning membrane proteins. The polypeptide is Membrane protein insertase YidC (Sinorhizobium fredii (strain NBRC 101917 / NGR234)).